The sequence spans 427 residues: Enolase (427 aa).

Glutamine 163 contacts (2R)-2-phosphoglycerate. Catalysis depends on glutamate 205, which acts as the Proton donor. Residues aspartate 242, glutamate 285, and aspartate 312 each contribute to the Mg(2+) site. The (2R)-2-phosphoglycerate site is built by lysine 337, arginine 366, serine 367, and lysine 388. The active-site Proton acceptor is the lysine 337.

This sequence belongs to the enolase family. Requires Mg(2+) as cofactor.

It localises to the cytoplasm. The protein localises to the secreted. Its subcellular location is the cell surface. It catalyses the reaction (2R)-2-phosphoglycerate = phosphoenolpyruvate + H2O. It participates in carbohydrate degradation; glycolysis; pyruvate from D-glyceraldehyde 3-phosphate: step 4/5. Its function is as follows. Catalyzes the reversible conversion of 2-phosphoglycerate (2-PG) into phosphoenolpyruvate (PEP). It is essential for the degradation of carbohydrates via glycolysis. The sequence is that of Enolase from Paraburkholderia phymatum (strain DSM 17167 / CIP 108236 / LMG 21445 / STM815) (Burkholderia phymatum).